Consider the following 349-residue polypeptide: Phosphoribosylformylglycinamidine cyclo-ligase (349 aa).

The protein belongs to the AIR synthase family.

The protein resides in the cytoplasm. It carries out the reaction 2-formamido-N(1)-(5-O-phospho-beta-D-ribosyl)acetamidine + ATP = 5-amino-1-(5-phospho-beta-D-ribosyl)imidazole + ADP + phosphate + H(+). It functions in the pathway purine metabolism; IMP biosynthesis via de novo pathway; 5-amino-1-(5-phospho-D-ribosyl)imidazole from N(2)-formyl-N(1)-(5-phospho-D-ribosyl)glycinamide: step 2/2. In Lactobacillus helveticus (strain DPC 4571), this protein is Phosphoribosylformylglycinamidine cyclo-ligase.